A 138-amino-acid chain; its full sequence is Large ribosomal subunit protein uL16 (138 aa).

Over residues 1-13 the composition is skewed to basic residues; that stretch reads MLQPARRKFRKEQ. A disordered region spans residues 1 to 22; it reads MLQPARRKFRKEQKGRNTGVAT.

The protein belongs to the universal ribosomal protein uL16 family. Part of the 50S ribosomal subunit.

Its function is as follows. Binds 23S rRNA and is also seen to make contacts with the A and possibly P site tRNAs. This Acidovorax ebreus (strain TPSY) (Diaphorobacter sp. (strain TPSY)) protein is Large ribosomal subunit protein uL16.